We begin with the raw amino-acid sequence, 443 residues long: C4-dicarboxylate transport protein (443 aa).

The next 7 helical transmembrane spans lie at 7–26 (SLYVQVIIAIVLGILVGALF), 46–63 (MVIAPIIFATVVSGVAHM), 76–98 (ALIYFEVVSTLALIIGMVVMNVL), 140–162 (LVSAFTGGELLPVLLVALLFGFA), 183–205 (VVFVILGFIMRLAPIGAFGAMAF), 218–240 (LGYLMGSFYLTCLLFIFVVLGLI), and 350–372 (FITLAATLGAVGHVPVAGMALIL). A disordered region spans residues 415–443 (GEDLPTTEPDVASEERGEGREIDSSRPVT). Positions 427–443 (SEERGEGREIDSSRPVT) are enriched in basic and acidic residues.

Belongs to the dicarboxylate/amino acid:cation symporter (DAACS) (TC 2.A.23) family.

The protein localises to the cell membrane. Its function is as follows. Responsible for the transport of dicarboxylates such as succinate, fumarate, and malate across the membrane. The polypeptide is C4-dicarboxylate transport protein (dctA) (Deinococcus radiodurans (strain ATCC 13939 / DSM 20539 / JCM 16871 / CCUG 27074 / LMG 4051 / NBRC 15346 / NCIMB 9279 / VKM B-1422 / R1)).